A 156-amino-acid chain; its full sequence is Small ribosomal subunit protein uS7 (156 aa).

Belongs to the universal ribosomal protein uS7 family. As to quaternary structure, part of the 30S ribosomal subunit. Contacts proteins S9 and S11.

One of the primary rRNA binding proteins, it binds directly to 16S rRNA where it nucleates assembly of the head domain of the 30S subunit. Is located at the subunit interface close to the decoding center, probably blocks exit of the E-site tRNA. The sequence is that of Small ribosomal subunit protein uS7 from Rhizobium rhizogenes (strain K84 / ATCC BAA-868) (Agrobacterium radiobacter).